Reading from the N-terminus, the 228-residue chain is Vesicle transport protein SEC20 (228 aa).

Topologically, residues methionine 1 to leucine 199 are cytoplasmic. Positions leucine 37–serine 90 form a coiled coil. The helical; Anchor for type IV membrane protein transmembrane segment at threonine 200–valine 220 threads the bilayer. At lysine 221–leucine 228 the chain is on the lumenal side.

Belongs to the SEC20 family. Component of a SNARE complex consisting of STX18, USE1L, BNIP1/SEC20L and SEC22B. Interacts directly with STX18, RINT1/TIP20L and NAPA. Interacts with ZW10 through RINT1. Interacts with BCL2. Interacts with RNF186. Interacts with RNF185. Interacts with SQSTM1; increased by 'Lys-63'-linked polyubiquitination of BNIP1. In terms of processing, polyubiquitinated. 'Lys-63'-linked polyubiquitination by RNF185 increases the interaction with the autophagy receptor SQSTM1. Undergoes 'Lys-29'- and 'Lys-63'-linked polyubiquitination by RNF186 that may regulate BNIP1 localization to the mitochondrion.

It localises to the endoplasmic reticulum membrane. It is found in the mitochondrion membrane. In terms of biological role, as part of a SNARE complex may be involved in endoplasmic reticulum membranes fusion and be required for the maintenance of endoplasmic reticulum organization. Also plays a role in apoptosis. It is for instance required for endoplasmic reticulum stress-induced apoptosis. As a substrate of RNF185 interacting with SQSTM1, might also be involved in mitochondrial autophagy. This chain is Vesicle transport protein SEC20, found in Rattus norvegicus (Rat).